We begin with the raw amino-acid sequence, 463 residues long: MTRKYFGTDGIRGRVGEAPITPEFVIHLGYSAGKVLTSSDWHLSKGERPAVLIGKDTRISGYMLESALQAGLSAAGVDVLLSGPMPTPAVAYLTRALRLQAGIVISASHNPFEDNGIKFFSALGAKLPDATEQEIEAGLNAPLKAMPSAQLGKARRVNDARGRYIEFCKSTFPNHLDLRGLRVVVDCAHGATYQIAGPVLHELGAEVVAIGIHPDGLNINHECGATHGAALQEAVRHHRADIGVALDGDGDRVIMTDGEGMLYDGDQLIYLVAKHRKQNGLLKGGVAGTLMTNLAIENGLKKLDIPFARANVGDRYVLELLQIKNWQLGGEGSGHIICLDKHTTGDGIISALQVLYAMRDSGKTLTELASDVTLYPQQLINVRVPKGFDAHNSLAIKTAQAEAERDLDTTGRVLLRASGTEPLIRVMVEGESGQKVKHWAEKIAEVVRNAAAGERSVEKALPN.

The active-site Phosphoserine intermediate is the Ser-108. 4 residues coordinate Mg(2+): Ser-108, Asp-247, Asp-249, and Asp-251. The residue at position 108 (Ser-108) is a Phosphoserine.

This sequence belongs to the phosphohexose mutase family. Mg(2+) is required as a cofactor. In terms of processing, activated by phosphorylation.

It carries out the reaction alpha-D-glucosamine 1-phosphate = D-glucosamine 6-phosphate. Catalyzes the conversion of glucosamine-6-phosphate to glucosamine-1-phosphate. The protein is Phosphoglucosamine mutase of Nitrosospira multiformis (strain ATCC 25196 / NCIMB 11849 / C 71).